We begin with the raw amino-acid sequence, 496 residues long: Galactan beta-1,4-galactosyltransferase GALS1 (496 aa).

A helical transmembrane segment spans residues 22-42; sequence IIATLLALSLVMIVWNLPPYY. One can recognise a GT92 domain in the interval 232 to 464; it reads DYLYCGSSLY…AKKKVTLYNK (233 aa).

Belongs to the glycosyltransferase 92 family. As to expression, expressed in root vasculature, mature leaves, trichomes, flowers, siliques and seeds.

The protein localises to the golgi apparatus membrane. Its function is as follows. Involved in the biosynthesis of beta-1,4-galactan. Can transfer galactose residues from UDP-galactose to beta-1,4-galactopentaose in vitro. Forms specifically beta-1,4-galactosyl linkages and can add successive beta-1,4-galactosyl residues to the acceptor. Beta-1,4-galactans are abundant polysaccharides in plant cell walls and are found as side-chain of rhamnogalacturonan I, which is a major component of pectin. The sequence is that of Galactan beta-1,4-galactosyltransferase GALS1 from Arabidopsis thaliana (Mouse-ear cress).